A 224-amino-acid chain; its full sequence is MAQDIKPTRKNLMEIEDRIDLSERGHDTLEQKRDGLIMEFMDILDQSQDVRSGLEGDYETAQQKINMARAMEGDVAVSGAAAALEEYPEITVESMNIMGVVVPQIESTKVKKSFDKRGYGILGTSARIDEAADAYEELLESIVLAAEVETAMKKMLTEIETTKRRVNALEFKLLPELHEGKEYIDQKLEEKEREEMFRMKKVKDKKEAQEEAADEAAAAESTGA.

Residues 200–209 (KKVKDKKEAQ) are compositionally biased toward basic and acidic residues. Positions 200-224 (KKVKDKKEAQEEAADEAAAAESTGA) are disordered. The span at 215-224 (EAAAAESTGA) shows a compositional bias: low complexity.

It belongs to the V-ATPase D subunit family. Has multiple subunits with at least A(3), B(3), C, D, E, F, H, I and proteolipid K(x).

The protein localises to the cell membrane. In terms of biological role, component of the A-type ATP synthase that produces ATP from ADP in the presence of a proton gradient across the membrane. This chain is A-type ATP synthase subunit D, found in Halobacterium salinarum (strain ATCC 29341 / DSM 671 / R1).